Reading from the N-terminus, the 487-residue chain is V-type proton ATPase subunit B2 (487 aa).

Gly-2 carries the N-acetylglycine modification.

The protein belongs to the ATPase alpha/beta chains family. In terms of assembly, V-ATPase is a heteromultimeric enzyme composed of a peripheral catalytic V1 complex (components A to H) attached to an integral membrane V0 proton pore complex (components: a, c, c'', d and e).

The protein resides in the vacuole membrane. Non-catalytic subunit of the peripheral V1 complex of vacuolar ATPase. V-ATPase is responsible for acidifying a variety of intracellular compartments in eukaryotic cells. The sequence is that of V-type proton ATPase subunit B2 (VHA-B2) from Arabidopsis thaliana (Mouse-ear cress).